The sequence spans 227 residues: MFS-type transporter FVEG_08288 (227 aa).

The helical transmembrane segment at 8–28 (VFLTVLIAIASCSVYILNIAI) threads the bilayer. Residue asparagine 40 is glycosylated (N-linked (GlcNAc...) asparagine). 5 helical membrane-spanning segments follow: residues 43 to 63 (TVGL…MAGG), 100 to 120 (VANT…YYGV), 122 to 142 (FMVP…HFTL), 164 to 181 (FVRN…APWM), and 188 to 208 (YMMT…IWLI).

The protein belongs to the major facilitator superfamily.

The protein localises to the membrane. In terms of biological role, MFS-type transporter; part of the Fusarium detoxification of benzoxazolinone cluster 1 (FDB1) involved in the degradation of benzoxazolinones produced by the host plant. Maize, wheat, and rye produce the 2 benzoxazinone phytoanticipins 2,4-dihy-droxy-7-methoxy-1,4-benzoxazin-3-one (DIMBOA) and 2,4-dihydroxy-1,4-benzoxazin-3-one (DIBOA) that, due to their inherent instability once released, spontaneously degrade to the more stable corresponding benzoxazolinones, 6-methoxy-2-benzoxazolinone (MBOA) and 2-benzoxazolinone (BOA), respectively. In Gibberella moniliformis (strain M3125 / FGSC 7600) (Maize ear and stalk rot fungus), this protein is MFS-type transporter FVEG_08288.